The sequence spans 67 residues: Large ribosomal subunit protein bL35 (67 aa).

It belongs to the bacterial ribosomal protein bL35 family.

The chain is Large ribosomal subunit protein bL35 from Deinococcus geothermalis (strain DSM 11300 / CIP 105573 / AG-3a).